The primary structure comprises 101 residues: Small ribosomal subunit protein uS14 (101 aa).

This sequence belongs to the universal ribosomal protein uS14 family. As to quaternary structure, part of the 30S ribosomal subunit. Contacts proteins S3 and S10.

Its function is as follows. Binds 16S rRNA, required for the assembly of 30S particles and may also be responsible for determining the conformation of the 16S rRNA at the A site. The polypeptide is Small ribosomal subunit protein uS14 (Cupriavidus pinatubonensis (strain JMP 134 / LMG 1197) (Cupriavidus necator (strain JMP 134))).